The sequence spans 587 residues: Bifunctional lycopene cyclase/phytoene synthase (587 aa).

The interval 1–236 is lycopene beta-cyclase; it reads MGLDYILVHV…IVFGLVCIDY (236 aa). The next 7 helical transmembrane spans lie at 5–25, 35–55, 65–85, 91–111, 116–136, 145–165, and 218–238; these read YILV…LVYW, KIST…SYLV, NGVI…FFII, SLVY…GTVA, LIGA…LCFG, IITW…GFII, and LFFL…DYAI. Residues 243-587 are phytoene synthase; that stretch reads CELVQSPQAV…VAYRAMAWRK (345 aa).

This sequence in the N-terminal section; belongs to the lycopene beta-cyclase family. In the C-terminal section; belongs to the phytoene/squalene synthase family.

It is found in the membrane. It carries out the reaction all-trans-lycopene = gamma-carotene. The catalysed reaction is gamma-carotene = all-trans-beta-carotene. The enzyme catalyses 2 (2E,6E,10E)-geranylgeranyl diphosphate = 15-cis-phytoene + 2 diphosphate. It participates in carotenoid biosynthesis; beta-carotene biosynthesis. It functions in the pathway carotenoid biosynthesis; phytoene biosynthesis; all-trans-phytoene from geranylgeranyl diphosphate: step 1/1. Its function is as follows. Bifunctional enzyme that catalyzes the reactions from geranylgeranyl diphosphate to phytoene (phytoene synthase) and lycopene to beta-carotene via the intermediate gamma-carotene (lycopene cyclase). The protein is Bifunctional lycopene cyclase/phytoene synthase of Aspergillus oryzae (strain ATCC 42149 / RIB 40) (Yellow koji mold).